The chain runs to 418 residues: Trimethyllysine dioxygenase, mitochondrial (418 aa).

Residues H239, D241, and H386 each contribute to the Fe cation site.

The protein belongs to the gamma-BBH/TMLD family. As to quaternary structure, homodimer. The cofactor is Fe(2+). It depends on L-ascorbate as a cofactor.

The protein localises to the mitochondrion matrix. It catalyses the reaction N(6),N(6),N(6)-trimethyl-L-lysine + 2-oxoglutarate + O2 = (3S)-3-hydroxy-N(6),N(6),N(6)-trimethyl-L-lysine + succinate + CO2. Its pathway is amine and polyamine biosynthesis; carnitine biosynthesis. Functionally, converts trimethyllysine (TML) into hydroxytrimethyllysine (HTML). The sequence is that of Trimethyllysine dioxygenase, mitochondrial (TMLHE) from Gallus gallus (Chicken).